The sequence spans 158 residues: Endoribonuclease YbeY (158 aa).

Zn(2+) is bound by residues histidine 114, histidine 118, and histidine 124.

This sequence belongs to the endoribonuclease YbeY family. Zn(2+) is required as a cofactor.

It is found in the cytoplasm. Single strand-specific metallo-endoribonuclease involved in late-stage 70S ribosome quality control and in maturation of the 3' terminus of the 16S rRNA. The protein is Endoribonuclease YbeY of Legionella pneumophila (strain Paris).